Consider the following 388-residue polypeptide: Succinyl-diaminopimelate desuccinylase (388 aa).

Residue His-74 participates in Zn(2+) binding. Asp-76 is a catalytic residue. Asp-107 provides a ligand contact to Zn(2+). Glu-142 serves as the catalytic Proton acceptor. Residues Glu-143, Glu-171, and His-360 each coordinate Zn(2+).

Belongs to the peptidase M20A family. DapE subfamily. As to quaternary structure, homodimer. The cofactor is Zn(2+). Co(2+) is required as a cofactor.

It carries out the reaction N-succinyl-(2S,6S)-2,6-diaminopimelate + H2O = (2S,6S)-2,6-diaminopimelate + succinate. Its pathway is amino-acid biosynthesis; L-lysine biosynthesis via DAP pathway; LL-2,6-diaminopimelate from (S)-tetrahydrodipicolinate (succinylase route): step 3/3. Its function is as follows. Catalyzes the hydrolysis of N-succinyl-L,L-diaminopimelic acid (SDAP), forming succinate and LL-2,6-diaminopimelate (DAP), an intermediate involved in the bacterial biosynthesis of lysine and meso-diaminopimelic acid, an essential component of bacterial cell walls. In Rhodopseudomonas palustris (strain BisB5), this protein is Succinyl-diaminopimelate desuccinylase.